The primary structure comprises 347 residues: Uroporphyrinogen decarboxylase (347 aa).

Substrate is bound by residues 36–40, aspartate 86, tyrosine 160, serine 212, and histidine 326; that span reads RQAGR.

Belongs to the uroporphyrinogen decarboxylase family. In terms of assembly, homodimer.

Its subcellular location is the cytoplasm. The catalysed reaction is uroporphyrinogen III + 4 H(+) = coproporphyrinogen III + 4 CO2. It participates in porphyrin-containing compound metabolism; protoporphyrin-IX biosynthesis; coproporphyrinogen-III from 5-aminolevulinate: step 4/4. In terms of biological role, catalyzes the decarboxylation of four acetate groups of uroporphyrinogen-III to yield coproporphyrinogen-III. The sequence is that of Uroporphyrinogen decarboxylase from Wolbachia sp. subsp. Brugia malayi (strain TRS).